The chain runs to 148 residues: Receptor activity-modifying protein 1 (148 aa).

An N-terminal signal peptide occupies residues 1–26; that stretch reads MARGLRGLPRRGLWLLLVNHLFLATA. 3 disulfides stabilise this stretch: Cys-27/Cys-82, Cys-40/Cys-72, and Cys-57/Cys-104. At 27–118 the chain is on the extracellular side; sequence CQDTDHAALL…RALQDPPSSV (92 aa). Residues 119 to 140 form a helical membrane-spanning segment; it reads LCPFIVVPILATLLMTALVVWR. Over 141 to 148 the chain is Cytoplasmic; that stretch reads SKRPEGIV.

This sequence belongs to the RAMP family. In terms of assembly, heterodimer of CALCRL and RAMP1; the interaction induces allosteric modulation of CALCRL function and CGRP1/CALCA and CGRP2/CALCB ligand specificity. Heterodimer of CALCR and RAMP1; interaction forms the AMYR1 receptor complex for amylin/IAPP and CGRP1/CALCA ligands.

The protein resides in the cell membrane. Functionally, accessory protein that interacts with and modulates the function of G-protein coupled receptors including calcitonin gene-related peptide type 1 receptor (CALCRL) and calcitonin receptor (CALCR). Required for the transport of CALCRL to the plasma membrane. Together with CALCRL, form the receptor complex for the calcitonin gene-related peptides CGRP1/CALCA and CGRP2/CALCB. Together with CALCR, form the AMYR1 receptor complex for amylin/IAPP and CGRP1/CALCA. The protein is Receptor activity-modifying protein 1 (RAMP1) of Sus scrofa (Pig).